We begin with the raw amino-acid sequence, 305 residues long: Transmembrane epididymal protein 1A (305 aa).

A helical transmembrane segment spans residues 4–24; sequence FIGHISPGLFLVFYGLYQAVI. N-linked (GlcNAc...) asparagine glycosylation occurs at asparagine 32. The next 5 helical transmembrane spans lie at 54–74, 124–144, 159–179, 187–207, and 223–243; these read IAHA…YEIS, CVLL…LLLV, SLLI…LWAP, IETF…FILF, and IMFV…CMLG. Residues 285 to 305 are disordered; the sequence is EQQDKDDQAPLLSKISPCDRA.

This sequence belongs to the TMEM45 family.

The protein resides in the membrane. This is Transmembrane epididymal protein 1A from Mus musculus (Mouse).